A 208-amino-acid polypeptide reads, in one-letter code: NAD-dependent protein deacylase (208 aa).

In terms of domain architecture, Deacetylase sirtuin-type spans 1-208 (MKPICVVLSG…NTGFNPVTGW (208 aa)). An NAD(+)-binding site is contributed by 10–29 (GAGISAESGIPTYRAEDGLW). Substrate contacts are provided by Tyr-54 and Arg-57. 87–90 (QNVE) serves as a coordination point for NAD(+). The active-site Proton acceptor is His-105. NAD(+)-binding positions include 170 to 172 (GTS) and 197 to 199 (NPN).

Belongs to the sirtuin family. Class III subfamily.

It localises to the cytoplasm. It catalyses the reaction N(6)-acetyl-L-lysyl-[protein] + NAD(+) + H2O = 2''-O-acetyl-ADP-D-ribose + nicotinamide + L-lysyl-[protein]. The catalysed reaction is N(6)-succinyl-L-lysyl-[protein] + NAD(+) + H2O = 2''-O-succinyl-ADP-D-ribose + nicotinamide + L-lysyl-[protein]. Its function is as follows. NAD-dependent lysine deacetylase and desuccinylase that specifically removes acetyl and succinyl groups on target proteins. Modulates the activities of several proteins which are inactive in their acylated form. In Aggregatibacter actinomycetemcomitans (Actinobacillus actinomycetemcomitans), this protein is NAD-dependent protein deacylase.